The primary structure comprises 369 residues: Anhydro-N-acetylmuramic acid kinase (369 aa).

12-19 contributes to the ATP binding site; that stretch reads GTSMDGVD.

This sequence belongs to the anhydro-N-acetylmuramic acid kinase family.

It catalyses the reaction 1,6-anhydro-N-acetyl-beta-muramate + ATP + H2O = N-acetyl-D-muramate 6-phosphate + ADP + H(+). It functions in the pathway amino-sugar metabolism; 1,6-anhydro-N-acetylmuramate degradation. The protein operates within cell wall biogenesis; peptidoglycan recycling. Functionally, catalyzes the specific phosphorylation of 1,6-anhydro-N-acetylmuramic acid (anhMurNAc) with the simultaneous cleavage of the 1,6-anhydro ring, generating MurNAc-6-P. Is required for the utilization of anhMurNAc either imported from the medium or derived from its own cell wall murein, and thus plays a role in cell wall recycling. This chain is Anhydro-N-acetylmuramic acid kinase, found in Shewanella amazonensis (strain ATCC BAA-1098 / SB2B).